Here is a 702-residue protein sequence, read N- to C-terminus: Elongation factor G (702 aa).

The region spanning 8-290 (ARYRNIGISA…AVIEYLPAPT (283 aa)) is the tr-type G domain. Residues 17–24 (AHIDAGKT), 88–92 (DTPGH), and 142–145 (NKMD) contribute to the GTP site.

It belongs to the TRAFAC class translation factor GTPase superfamily. Classic translation factor GTPase family. EF-G/EF-2 subfamily.

It is found in the cytoplasm. Its function is as follows. Catalyzes the GTP-dependent ribosomal translocation step during translation elongation. During this step, the ribosome changes from the pre-translocational (PRE) to the post-translocational (POST) state as the newly formed A-site-bound peptidyl-tRNA and P-site-bound deacylated tRNA move to the P and E sites, respectively. Catalyzes the coordinated movement of the two tRNA molecules, the mRNA and conformational changes in the ribosome. The chain is Elongation factor G from Photorhabdus laumondii subsp. laumondii (strain DSM 15139 / CIP 105565 / TT01) (Photorhabdus luminescens subsp. laumondii).